A 410-amino-acid polypeptide reads, in one-letter code: D-amino acid dehydrogenase (410 aa).

Position 9–14 (9–14 (GGGIVG)) interacts with FAD.

It belongs to the DadA oxidoreductase family. FAD serves as cofactor.

Its subcellular location is the cell inner membrane. It catalyses the reaction a D-alpha-amino acid + a quinone + H2O = a 2-oxocarboxylate + a quinol + NH4(+). In terms of biological role, catalyzes the oxidative deamination of D-amino acids. Has broad substrate specificity; is mostly active on D-proline, and to a lesser extent, on several other D-amino acids such as D-alanine, D-phenylalanine and D-serine. Mediates electron transport from D-proline to coenzyme Q1 in vitro, and is involved in the electron transport chain from D-proline to the c-type cytochrome in vivo. This Helicobacter pylori (strain J99 / ATCC 700824) (Campylobacter pylori J99) protein is D-amino acid dehydrogenase.